We begin with the raw amino-acid sequence, 442 residues long: Tyrosine--tRNA ligase (442 aa).

L-tyrosine is bound at residue Y55. A 'HIGH' region motif is present at residues 60–69 (PTAPSLHLGN). Y190 and Q194 together coordinate L-tyrosine. Residues 250–254 (KFGKS) carry the 'KMSKS' region motif. Residue K253 coordinates ATP. Residues 373–438 (VAIAQALVDT…GKKTLAGVFV (66 aa)) enclose the S4 RNA-binding domain.

The protein belongs to the class-I aminoacyl-tRNA synthetase family. TyrS type 1 subfamily. In terms of assembly, homodimer.

It localises to the cytoplasm. The catalysed reaction is tRNA(Tyr) + L-tyrosine + ATP = L-tyrosyl-tRNA(Tyr) + AMP + diphosphate + H(+). Catalyzes the attachment of tyrosine to tRNA(Tyr) in a two-step reaction: tyrosine is first activated by ATP to form Tyr-AMP and then transferred to the acceptor end of tRNA(Tyr). The sequence is that of Tyrosine--tRNA ligase from Leifsonia xyli subsp. xyli (strain CTCB07).